The chain runs to 415 residues: Squalene synthase 1 (415 aa).

A run of 2 helical transmembrane segments spans residues 281–301 and 391–411; these read AIFR…ALCF and LIAI…SNLL.

Belongs to the phytoene/squalene synthase family. The cofactor is Mg(2+). Mn(2+) serves as cofactor. As to expression, mostly expressed in the shoot apex (buds) and roots, and, to a lower extent, in stems, leaves, flowers and seeds.

The protein resides in the endoplasmic reticulum membrane. The catalysed reaction is 2 (2E,6E)-farnesyl diphosphate + NADH + H(+) = squalene + 2 diphosphate + NAD(+). It catalyses the reaction 2 (2E,6E)-farnesyl diphosphate + NADPH + H(+) = squalene + 2 diphosphate + NADP(+). It participates in terpene metabolism; lanosterol biosynthesis; lanosterol from farnesyl diphosphate: step 1/3. Its function is as follows. Component of the triterpene saponins (e.g. ginsenosides or panaxosides) and phytosterols biosynthetic pathways. Catalyzes the biosynthesis of squalene. The sequence is that of Squalene synthase 1 from Panax ginseng (Korean ginseng).